A 215-amino-acid chain; its full sequence is Uridine kinase (215 aa).

16 to 23 is a binding site for ATP; it reads GASASGKS.

It belongs to the uridine kinase family.

The protein localises to the cytoplasm. The catalysed reaction is uridine + ATP = UMP + ADP + H(+). It catalyses the reaction cytidine + ATP = CMP + ADP + H(+). The protein operates within pyrimidine metabolism; CTP biosynthesis via salvage pathway; CTP from cytidine: step 1/3. It participates in pyrimidine metabolism; UMP biosynthesis via salvage pathway; UMP from uridine: step 1/1. This Aliivibrio salmonicida (strain LFI1238) (Vibrio salmonicida (strain LFI1238)) protein is Uridine kinase.